The chain runs to 618 residues: Alpha-dioxygenase PIOX (618 aa).

His-157 functions as the Proton acceptor in the catalytic mechanism. Asp-158 contacts Ca(2+). His-162 contributes to the heme b binding site. Positions 210, 212, 214, and 216 each coordinate Ca(2+). His-311 contributes to the hexadecanoate binding site. Heme b contacts are provided by His-382, Arg-479, and Arg-483. Residue Glu-599 coordinates hexadecanoate.

The protein belongs to the peroxidase family. Heme b serves as cofactor. Requires Ca(2+) as cofactor.

It carries out the reaction a 1,2-saturated fatty acid + O2 = a (2R)-2-hydroperoxy fatty acid. The enzyme catalyses (9Z,12Z)-octadecadienoate + O2 = (2R,9Z,12Z)-2-hydroperoxyoctadecadienoate. It catalyses the reaction hexadecanoate + O2 = (2R)-2-hydroperoxyhexadecanoate. The catalysed reaction is (9Z,12Z,15Z)-octadecatrienoate + O2 = (R)-2-hydroperoxy-(9Z,12Z,15Z)-octadecatrienoate. It carries out the reaction tetradecanoate + O2 = (2R)-2-hydroperoxytetradecanoate. The enzyme catalyses octadecanoate + O2 = (2R)-2-hydroperoxyoctadecanoate. It catalyses the reaction (9Z)-octadecenoate + O2 = (2R,9Z)-2-hydroperoxyoctadecenoate. In terms of biological role, alpha-dioxygenase that catalyzes the primary oxygenation step of a variety of 14-20 carbon fatty acids, containing up to three unsaturated bonds, into their corresponding 2R-hydroperoxides. Involved in the production of oxylipins that function in cell signaling, wound healing, and protection from infection. This chain is Alpha-dioxygenase PIOX, found in Oryza sativa subsp. japonica (Rice).